Consider the following 297-residue polypeptide: uncharacterized protein (297 aa).

The segment covering 1–12 (MASYSFQFSTDA) has biased composition (polar residues). Residues 1–21 (MASYSFQFSTDATGKPGAAKP) are disordered.

This sequence to B.subtilis XkdY/XepA.

This is an uncharacterized protein from Bacillus subtilis (strain 168).